We begin with the raw amino-acid sequence, 130 residues long: Small ribosomal subunit protein uS11c (130 aa).

This sequence belongs to the universal ribosomal protein uS11 family. In terms of assembly, part of the 30S ribosomal subunit.

It is found in the plastid. It localises to the chloroplast. This chain is Small ribosomal subunit protein uS11c, found in Trieres chinensis (Marine centric diatom).